The sequence spans 289 residues: Probable WRKY transcription factor 38 (289 aa).

The tract at residues 62-103 (PETEDDQFSDLSSRDSSPPPQGSPSKKRKIDSTNSSENWRDD) is disordered. A DNA-binding region (WRKY) is located at residues 104–172 (SPDPIYYDGY…YFGHHTCKTE (69 aa)). Residues 249 to 266 (LSSPSGSYPPSSSSGSES) show a composition bias toward low complexity. Positions 249–278 (LSSPSGSYPPSSSSGSESADFNSDLLFDNP) are disordered.

It belongs to the WRKY group III family.

It is found in the nucleus. Functionally, transcription factor. Interacts specifically with the W box (5'-(T)TGAC[CT]-3'), a frequently occurring elicitor-responsive cis-acting element. The chain is Probable WRKY transcription factor 38 (WRKY38) from Arabidopsis thaliana (Mouse-ear cress).